The sequence spans 332 residues: Succinylglutamate desuccinylase (332 aa).

His-59, Glu-62, and His-151 together coordinate Zn(2+). Glu-215 is an active-site residue.

It belongs to the AspA/AstE family. Succinylglutamate desuccinylase subfamily. Zn(2+) serves as cofactor.

The catalysed reaction is N-succinyl-L-glutamate + H2O = L-glutamate + succinate. The protein operates within amino-acid degradation; L-arginine degradation via AST pathway; L-glutamate and succinate from L-arginine: step 5/5. In terms of biological role, transforms N(2)-succinylglutamate into succinate and glutamate. The protein is Succinylglutamate desuccinylase of Pseudomonas aeruginosa (strain UCBPP-PA14).